The primary structure comprises 651 residues: Translation factor GUF1 homolog, mitochondrial (651 aa).

Residues M1 to F26 constitute a mitochondrion transit peptide. The tr-type G domain maps to K51–K228. GTP-binding positions include A60–S67, D121–H125, and N175–D178.

It belongs to the TRAFAC class translation factor GTPase superfamily. Classic translation factor GTPase family. LepA subfamily.

It localises to the mitochondrion inner membrane. It carries out the reaction GTP + H2O = GDP + phosphate + H(+). In terms of biological role, promotes mitochondrial protein synthesis. May act as a fidelity factor of the translation reaction, by catalyzing a one-codon backward translocation of tRNAs on improperly translocated ribosomes. Binds to mitochondrial ribosomes in a GTP-dependent manner. In Brugia malayi (Filarial nematode worm), this protein is Translation factor GUF1 homolog, mitochondrial.